Here is a 184-residue protein sequence, read N- to C-terminus: Ribosome-recycling factor (184 aa).

The protein belongs to the RRF family.

It localises to the cytoplasm. In terms of biological role, responsible for the release of ribosomes from messenger RNA at the termination of protein biosynthesis. May increase the efficiency of translation by recycling ribosomes from one round of translation to another. The polypeptide is Ribosome-recycling factor (Staphylococcus carnosus (strain TM300)).